The primary structure comprises 346 residues: MSKIFVDACLGKETPYTPVWMMRQAGRYLPEYMKVRAEAGNFLNLCHDPEKACEVTLQPVDIVGVDAAILFSDILVIPDEMGMDLSFVKGEGPKFSDPIKTQADVDRLIGGEEAAGKLTYVYDTIKLIKERLAEDKALIGFTGAPWTLATYMIEGQGTKTYNICKKMMYSDPELLHNILAKVTEVVKYYMEKQIEAGIDVVQIFDSWASAIEPGKYDEFSWKYMVEIADYLKSKYPDTPIIMFPKGIPAFIERGLVYGNFDVFGVDWGTPMALAKEKLGDQYVLQGNMEPCRLYSKEATTECVEAIQKVMGGKRHIFNLGHGILPDVPVENAKHFVNECHRVSGKK.

Substrate is bound by residues 23–27 (RQAGR), Asp73, Tyr151, Ser206, and His321.

It belongs to the uroporphyrinogen decarboxylase family. In terms of assembly, homodimer.

It localises to the cytoplasm. It carries out the reaction uroporphyrinogen III + 4 H(+) = coproporphyrinogen III + 4 CO2. It participates in porphyrin-containing compound metabolism; protoporphyrin-IX biosynthesis; coproporphyrinogen-III from 5-aminolevulinate: step 4/4. Functionally, catalyzes the decarboxylation of four acetate groups of uroporphyrinogen-III to yield coproporphyrinogen-III. This is Uroporphyrinogen decarboxylase from Sulfurovum sp. (strain NBC37-1).